A 318-amino-acid polypeptide reads, in one-letter code: Receptor homology region, transmembrane domain- and RING domain-containing protein 5 (318 aa).

The N-terminal stretch at 1–20 (MNYSWITIMSLLVICKLASA) is a signal peptide. The Lumenal segment spans residues 22–163 (VVLIGKNTIL…IPGFGISSWS (142 aa)). An intrachain disulfide couples Cys-62 to Cys-87. Residues 70 to 143 (EKRSKYRSSY…RASGEVLKGY (74 aa)) enclose the PA domain. An N-linked (GlcNAc...) asparagine glycan is attached at Asn-121. Residues 164 to 184 (IMGITFISLLAMSAILATCFV) traverse the membrane as a helical segment. Residues 185-318 (VRRHQIRQSV…DLPIVVRVYL (134 aa)) lie on the Cytoplasmic side of the membrane. The RING-type; atypical zinc-finger motif lies at 233-275 (CAICIDDYCVGEKLRILPCKHKYHAVCIDSWLGRCRSFCPVCK).

The protein localises to the prevacuolar compartment membrane. Its subcellular location is the protein storage vacuole membrane. In terms of biological role, involved in the trafficking of vacuolar proteins. May function as a sorting receptor for protein trafficking to the protein storage vacuole (PSV). This chain is Receptor homology region, transmembrane domain- and RING domain-containing protein 5 (RMR5), found in Arabidopsis thaliana (Mouse-ear cress).